Here is a 159-residue protein sequence, read N- to C-terminus: Phosphopantetheine adenylyltransferase (159 aa).

Ser8 contributes to the substrate binding site. ATP contacts are provided by residues Ser8–Phe9 and His16. Positions 40, 72, and 86 each coordinate substrate. ATP is bound by residues Gly87 to Arg89, Glu97, and Tyr122 to Ser128.

The protein belongs to the bacterial CoaD family. In terms of assembly, homohexamer. Mg(2+) serves as cofactor.

It localises to the cytoplasm. It carries out the reaction (R)-4'-phosphopantetheine + ATP + H(+) = 3'-dephospho-CoA + diphosphate. The protein operates within cofactor biosynthesis; coenzyme A biosynthesis; CoA from (R)-pantothenate: step 4/5. Its function is as follows. Reversibly transfers an adenylyl group from ATP to 4'-phosphopantetheine, yielding dephospho-CoA (dPCoA) and pyrophosphate. The chain is Phosphopantetheine adenylyltransferase from Synechocystis sp. (strain ATCC 27184 / PCC 6803 / Kazusa).